A 330-amino-acid chain; its full sequence is Aspartate--ammonia ligase (330 aa).

Belongs to the class-II aminoacyl-tRNA synthetase family. AsnA subfamily.

It is found in the cytoplasm. It carries out the reaction L-aspartate + NH4(+) + ATP = L-asparagine + AMP + diphosphate + H(+). It participates in amino-acid biosynthesis; L-asparagine biosynthesis; L-asparagine from L-aspartate (ammonia route): step 1/1. This chain is Aspartate--ammonia ligase, found in Streptococcus pyogenes serotype M6 (strain ATCC BAA-946 / MGAS10394).